The chain runs to 220 residues: Elongation factor Ts, chloroplastic (220 aa).

The protein belongs to the EF-Ts family.

The protein localises to the plastid. The protein resides in the chloroplast. Its function is as follows. Associates with the EF-Tu.GDP complex and induces the exchange of GDP to GTP. It remains bound to the aminoacyl-tRNA.EF-Tu.GTP complex up to the GTP hydrolysis stage on the ribosome. This chain is Elongation factor Ts, chloroplastic (tsf), found in Porphyra purpurea (Red seaweed).